We begin with the raw amino-acid sequence, 347 residues long: NADH-ubiquinone oxidoreductase chain 2 (347 aa).

The next 11 membrane-spanning stretches (helical) occupy residues proline 3–serine 23, histidine 25–methionine 45, tyrosine 59–leucine 79, threonine 96–proline 116, isoleucine 122–leucine 142, leucine 153–threonine 173, isoleucine 178–proline 198, methionine 200–methionine 220, methionine 237–leucine 257, glutamate 274–methionine 294, and phenylalanine 325–isoleucine 345.

This sequence belongs to the complex I subunit 2 family. Core subunit of respiratory chain NADH dehydrogenase (Complex I) which is composed of 45 different subunits. Interacts with TMEM242.

Its subcellular location is the mitochondrion inner membrane. It carries out the reaction a ubiquinone + NADH + 5 H(+)(in) = a ubiquinol + NAD(+) + 4 H(+)(out). In terms of biological role, core subunit of the mitochondrial membrane respiratory chain NADH dehydrogenase (Complex I) which catalyzes electron transfer from NADH through the respiratory chain, using ubiquinone as an electron acceptor. Essential for the catalytic activity and assembly of complex I. This chain is NADH-ubiquinone oxidoreductase chain 2, found in Paradoxurus hermaphroditus (Asian palm civet).